A 165-amino-acid polypeptide reads, in one-letter code: Protein OPG091 (165 aa).

The protein belongs to the orthopoxvirus OPG091 family.

Its subcellular location is the virion. The protein localises to the host cytoplasm. Its function is as follows. Contributes to vaccinia virus virulence in mice but not to replication in cell culture. This Homo sapiens (Human) protein is Protein OPG091 (OPG091).